The primary structure comprises 248 residues: Ureidoacrylate amidohydrolase RutB (248 aa).

D41 functions as the Proton acceptor in the catalytic mechanism. K150 is an active-site residue. The Nucleophile role is filled by C183.

Belongs to the isochorismatase family. RutB subfamily.

The enzyme catalyses (Z)-3-ureidoacrylate + H2O + H(+) = (Z)-3-aminoacrylate + NH4(+) + CO2. The catalysed reaction is (Z)-3-ureidoacrylate + H2O = (Z)-3-aminoacrylate + carbamate + H(+). It carries out the reaction (Z)-2-methylureidoacrylate + H2O + H(+) = (Z)-2-methylaminoacrylate + NH4(+) + CO2. Its function is as follows. Hydrolyzes ureidoacrylate to form aminoacrylate and carbamate. The carbamate hydrolyzes spontaneously, thereby releasing one of the nitrogen atoms of the pyrimidine ring as ammonia and one of its carbon atoms as CO2. This is Ureidoacrylate amidohydrolase RutB from Stutzerimonas stutzeri (strain A1501) (Pseudomonas stutzeri).